The chain runs to 230 residues: Phosphatidate cytidylyltransferase (230 aa).

6 consecutive transmembrane segments (helical) span residues 33–53, 67–87, 95–115, 133–153, 167–187, and 206–226; these read FVIA…LVGT, IPDL…LIFL, WLIM…MIGG, WSGL…VSFI, IYLF…DLFI, and HGGV…LFLM.

It belongs to the CDS family.

It is found in the cell membrane. The enzyme catalyses a 1,2-diacyl-sn-glycero-3-phosphate + CTP + H(+) = a CDP-1,2-diacyl-sn-glycerol + diphosphate. It participates in phospholipid metabolism; CDP-diacylglycerol biosynthesis; CDP-diacylglycerol from sn-glycerol 3-phosphate: step 3/3. The polypeptide is Phosphatidate cytidylyltransferase (cdsA) (Rickettsia conorii (strain ATCC VR-613 / Malish 7)).